The sequence spans 92 residues: Small ribosomal subunit protein uS19c (92 aa).

This sequence belongs to the universal ribosomal protein uS19 family.

It localises to the plastid. The protein resides in the chloroplast. Its function is as follows. Protein S19 forms a complex with S13 that binds strongly to the 16S ribosomal RNA. The protein is Small ribosomal subunit protein uS19c of Spirogyra maxima (Green alga).